Reading from the N-terminus, the 1383-residue chain is DNA-directed RNA polymerase subunit beta'' (1383 aa).

Positions 220, 289, 296, and 299 each coordinate Zn(2+).

Belongs to the RNA polymerase beta' chain family. RpoC2 subfamily. In plastids the minimal PEP RNA polymerase catalytic core is composed of four subunits: alpha, beta, beta', and beta''. When a (nuclear-encoded) sigma factor is associated with the core the holoenzyme is formed, which can initiate transcription. The cofactor is Zn(2+).

The protein resides in the plastid. It is found in the chloroplast. The enzyme catalyses RNA(n) + a ribonucleoside 5'-triphosphate = RNA(n+1) + diphosphate. Functionally, DNA-dependent RNA polymerase catalyzes the transcription of DNA into RNA using the four ribonucleoside triphosphates as substrates. The polypeptide is DNA-directed RNA polymerase subunit beta'' (Oenothera argillicola (Appalachian evening primrose)).